A 363-amino-acid chain; its full sequence is tRNA/tmRNA (uracil-C(5))-methyltransferase (363 aa).

Positions 187, 215, 220, 236, and 296 each coordinate S-adenosyl-L-methionine. C321 acts as the Nucleophile in catalysis. The active-site Proton acceptor is E355.

The protein belongs to the class I-like SAM-binding methyltransferase superfamily. RNA M5U methyltransferase family. TrmA subfamily.

The catalysed reaction is uridine(54) in tRNA + S-adenosyl-L-methionine = 5-methyluridine(54) in tRNA + S-adenosyl-L-homocysteine + H(+). It carries out the reaction uridine(341) in tmRNA + S-adenosyl-L-methionine = 5-methyluridine(341) in tmRNA + S-adenosyl-L-homocysteine + H(+). In terms of biological role, dual-specificity methyltransferase that catalyzes the formation of 5-methyluridine at position 54 (m5U54) in all tRNAs, and that of position 341 (m5U341) in tmRNA (transfer-mRNA). The sequence is that of tRNA/tmRNA (uracil-C(5))-methyltransferase from Pseudomonas paraeruginosa (strain DSM 24068 / PA7) (Pseudomonas aeruginosa (strain PA7)).